A 139-amino-acid chain; its full sequence is Large ribosomal subunit protein uL16 (139 aa).

It belongs to the universal ribosomal protein uL16 family. Part of the 50S ribosomal subunit.

Functionally, binds 23S rRNA and is also seen to make contacts with the A and possibly P site tRNAs. This Crocosphaera subtropica (strain ATCC 51142 / BH68) (Cyanothece sp. (strain ATCC 51142)) protein is Large ribosomal subunit protein uL16.